Consider the following 148-residue polypeptide: CASP-like protein 1 (148 aa).

The next 3 membrane-spanning stretches (helical) occupy residues 31–51 (FIYFVAAFSVAGLYSIITSLL), 74–94 (VLLLGIVAAAIGAAGGVGYIG), and 121–141 (IAAGLIASIVLVLLILLSFFT).

The protein belongs to the Casparian strip membrane proteins (CASP) family. In terms of assembly, homodimer and heterodimers.

It is found in the cell membrane. The sequence is that of CASP-like protein 1 from Panax ginseng (Korean ginseng).